The sequence spans 397 residues: Serpin B10 (397 aa).

The short motif at 74 to 77 is the Nuclear localization signal element; that stretch reads KKRK.

This sequence belongs to the serpin family. Ov-serpin subfamily.

It is found in the nucleus. The protein localises to the cytoplasm. In terms of biological role, protease inhibitor that may play a role in the regulation of protease activities during hematopoiesis and apoptosis induced by TNF. May regulate protease activities in the cytoplasm and in the nucleus. The sequence is that of Serpin B10 (SERPINB10) from Plecturocebus moloch (Dusky titi monkey).